Consider the following 211-residue polypeptide: Large ribosomal subunit protein uL3 (211 aa).

N5-methylglutamine is present on glutamine 150.

This sequence belongs to the universal ribosomal protein uL3 family. In terms of assembly, part of the 50S ribosomal subunit. Forms a cluster with proteins L14 and L19. In terms of processing, methylated by PrmB.

Its function is as follows. One of the primary rRNA binding proteins, it binds directly near the 3'-end of the 23S rRNA, where it nucleates assembly of the 50S subunit. The protein is Large ribosomal subunit protein uL3 of Pseudomonas fluorescens (strain Pf0-1).